A 375-amino-acid chain; its full sequence is cAMP-dependent protein kinase regulatory subunit (375 aa).

Residues 28–142 (RFCADYFNER…SLYKSVSHNF (115 aa)) form a dimerization and phosphorylation region. Positions 41–50 (REEADDDGPR) are enriched in basic and acidic residues. The disordered stretch occupies residues 41–102 (REEADDDGPR…EPAAPFTRRT (62 aa)). A compositionally biased stretch (polar residues) spans 64 to 82 (GSSSRSTDGSLFRSSFADT). Positions 83–97 (SSEGPGSASSEPAAP) are enriched in low complexity. A Phosphoserine modification is found at Ser-103. Residues 143–258 (LFGN…FLKE), Glu-208, Arg-217, 261–375 (ILSD…DPTK), Glu-328, and Arg-337 each bind 3',5'-cyclic AMP.

The protein belongs to the cAMP-dependent kinase regulatory chain family. In terms of assembly, tetramer, composed of 2 regulatory (R) and 2 catalytic (C) subunits. In the presence of cAMP it dissociates into 2 active monomeric C subunits and an R dimer.

This is cAMP-dependent protein kinase regulatory subunit (PKAR) from Yarrowia lipolytica (strain CLIB 122 / E 150) (Yeast).